The following is a 134-amino-acid chain: Mediator of RNA polymerase II transcription subunit 10 (134 aa).

This sequence belongs to the Mediator complex subunit 10 family. As to quaternary structure, component of the Mediator complex.

It is found in the nucleus. In terms of biological role, component of the Mediator complex, a coactivator involved in the regulated transcription of nearly all RNA polymerase II-dependent genes. Mediator functions as a bridge to convey information from gene-specific regulatory proteins to the basal RNA polymerase II transcription machinery. Mediator is recruited to promoters by direct interactions with regulatory proteins and serves as a scaffold for the assembly of a functional preinitiation complex with RNA polymerase II and the general transcription factors. Negatively regulates the Wnt signaling pathway and positively regulates the Nodal signaling pathway. Required for cardiac cushion formation. In Danio rerio (Zebrafish), this protein is Mediator of RNA polymerase II transcription subunit 10 (med10).